Reading from the N-terminus, the 219-residue chain is Probable nicotinate-nucleotide adenylyltransferase (219 aa).

It belongs to the NadD family.

It carries out the reaction nicotinate beta-D-ribonucleotide + ATP + H(+) = deamido-NAD(+) + diphosphate. It functions in the pathway cofactor biosynthesis; NAD(+) biosynthesis; deamido-NAD(+) from nicotinate D-ribonucleotide: step 1/1. Functionally, catalyzes the reversible adenylation of nicotinate mononucleotide (NaMN) to nicotinic acid adenine dinucleotide (NaAD). This chain is Probable nicotinate-nucleotide adenylyltransferase, found in Pseudoalteromonas atlantica (strain T6c / ATCC BAA-1087).